The following is a 430-amino-acid chain: Aspartate aminotransferase, mitochondrial (430 aa).

The N-terminal 28 residues, 1 to 28 (MALAMMIRNAASKRGMTPISGHFGGLRS), are a transit peptide targeting the mitochondrion. The L-aspartate site is built by glycine 65, tryptophan 160, and asparagine 213. At lysine 277 the chain carries N6-(pyridoxal phosphate)lysine. Arginine 405 serves as a coordination point for L-aspartate.

The protein belongs to the class-I pyridoxal-phosphate-dependent aminotransferase family. Homodimer. Pyridoxal 5'-phosphate serves as cofactor.

It localises to the mitochondrion matrix. The enzyme catalyses L-aspartate + 2-oxoglutarate = oxaloacetate + L-glutamate. Functionally, amino acid aminotransferase important for the metabolism of amino acids and Krebs-cycle related organic acids. No activity with D-Asp or D-Ala as amino donors. In plants, it is involved in nitrogen metabolism and in aspects of carbon and energy metabolism. The sequence is that of Aspartate aminotransferase, mitochondrial (ASP1) from Arabidopsis thaliana (Mouse-ear cress).